A 179-amino-acid chain; its full sequence is DELTA-actitoxin-Afr1a (179 aa).

The N-terminal alpha-helix that contributes to the pore stretch occupies residues 1–29 (SADVAGAVIDGAGLGFDVLKTVLEALGNV). Arg-31 contacts an N-(acyl)-sphingosylphosphocholine. The N-acetyl-D-glucosamine 6-sulfate site is built by Tyr-51 and Arg-53. Positions 53, 54, 79, 85, 108, 113, 114, 116, 133, 137, 138, 144, and 168 each coordinate an N-(acyl)-sphingosylphosphocholine. The interval 105–120 (SVPYDYNWYSNWWNVR) is trp-rich region, which is important for the binding to lipid membrane. An N-acetyl-D-glucosamine 6-sulfate-binding site is contributed by Tyr-138. The Cell attachment site, crucial for protein stability signature appears at 144 to 146 (RGD).

This sequence belongs to the actinoporin family. Sea anemone subfamily. In terms of assembly, octamer or nonamer in membranes. Monomer in the soluble state.

It is found in the secreted. Its subcellular location is the nematocyst. It localises to the target cell membrane. Pore-forming toxin (PFT) that consists of a crown-shaped octamer or nonamer that forms cation-selective hydrophilic pores of about 1.5 nm (inside) and 13 nm (outside). It causes cardiac stimulation and cytolysis (EC(50)=1.6 nM on erythrocytes). Interestingly, the Phe-16 is crucial for hemolysis. Pore formation is a multi-step process that involves specific recognition of membrane sphingomyelin (but neither cholesterol nor phosphatidylcholine) using aromatic rich region and adjacent phosphocholine (POC) binding site, firm binding to the membrane (mainly driven by hydrophobic interactions) accompanied by the transfer of the N-terminal region to the lipid-water interface and finally pore formation after oligomerization of monomers. It is probable that a dimeric form is an assembly intermediate before the complete oligomerization. The formation of stable pores occurs only in vesicles composed of DOPC/SM (there is no oligomerization when the PFT is treated with vesicles of DOPC or SM alone). The transmembrane pore displays 8 lateral perforations, one at each subunit-subunit interface, partially occupied by the acyl-chain region of a bridging lipid. Each pore contains 24 lipid molecules, firmly bound to each subunit, that is, 3 lipids (L1, L2, L3, L4 and/or L5) are associated to each subunit. Lipid L1 bridges 2 subunits, whereas lipids L2 and L3 bind to sites at single subunit. The chain is DELTA-actitoxin-Afr1a from Actinia fragacea (Strawberry anemone).